Consider the following 98-residue polypeptide: NADH-ubiquinone oxidoreductase chain 4L (98 aa).

3 helical membrane-spanning segments follow: residues methionine 1–phenylalanine 21, leucine 26–leucine 46, and alanine 59–valine 79.

This sequence belongs to the complex I subunit 4L family.

Its subcellular location is the mitochondrion membrane. It carries out the reaction a ubiquinone + NADH + 5 H(+)(in) = a ubiquinol + NAD(+) + 4 H(+)(out). In terms of biological role, core subunit of the mitochondrial membrane respiratory chain NADH dehydrogenase (Complex I) which catalyzes electron transfer from NADH through the respiratory chain, using ubiquinone as an electron acceptor. Part of the enzyme membrane arm which is embedded in the lipid bilayer and involved in proton translocation. The sequence is that of NADH-ubiquinone oxidoreductase chain 4L (MT-ND4L) from Tetraodon nigroviridis (Spotted green pufferfish).